The sequence spans 274 residues: CDC48-associated ubiquitin-like/zinc finger protein 1 (274 aa).

Residues leucine 12–glutamate 58 form an AN1-type zinc finger. The Zn(2+) site is built by cysteine 18, cysteine 21, cysteine 31, cysteine 34, cysteine 39, histidine 42, histidine 48, and cysteine 50. Residues asparagine 170 to histidine 266 are ubiquitin-like. Phosphoserine is present on serine 273.

Interacts (via its ubiquitin-like domain) with CDC48 (via N-terminus). Associates with the 26S proteasome. Specifically interacts with the regulatory particle (RP) subunit RPN2. Exposure to arsenite, a known inducer of protein misfolding resulting in accumulation of polyubiquitinated conjugates, enhances the association with the proteoasome. Binds to ubiquitinated proteins conjugated to a 4 or more molecule ubiquitin chain. Binding to ubiquitinated proteins is zinc-dependent.

It is found in the cytoplasm. The protein localises to the nucleus. Functionally, promotes efficient arsenite-induced clearance of stress granules (SGs). May have a role in the ubiquitin-proteasome system (UPS) protecting cells from metalloid-induced proteotoxicity. The sequence is that of CDC48-associated ubiquitin-like/zinc finger protein 1 from Saccharomyces cerevisiae (strain ATCC 204508 / S288c) (Baker's yeast).